The following is a 1366-amino-acid chain: DNA-directed RNA polymerase subunit beta' (1366 aa).

A disordered region spans residues 1–40 (MTSTSPKSRRSSGKGRKGSKKKGKQVSQIPPLSKTPPSFR). Positions 7–24 (KSRRSSGKGRKGSKKKGK) are enriched in basic residues. The span at 25 to 38 (QVSQIPPLSKTPPS) shows a compositional bias: polar residues. Zn(2+) is bound by residues cysteine 250, cysteine 317, cysteine 324, and cysteine 327. The disordered stretch occupies residues 1299 to 1366 (TAAKSTSVLD…LQEEGLLADE (68 aa)). Positions 1353-1366 (ALEGLQEEGLLADE) are enriched in low complexity.

The protein belongs to the RNA polymerase beta' chain family. RpoC2 subfamily. In cyanobacteria the RNAP catalytic core is composed of 2 alpha, 1 beta, 1 beta', 1 gamma and 1 omega subunit. When a sigma factor is associated with the core the holoenzyme is formed, which can initiate transcription. The cofactor is Zn(2+).

The enzyme catalyses RNA(n) + a ribonucleoside 5'-triphosphate = RNA(n+1) + diphosphate. Functionally, DNA-dependent RNA polymerase catalyzes the transcription of DNA into RNA using the four ribonucleoside triphosphates as substrates. The polypeptide is DNA-directed RNA polymerase subunit beta' (Prochlorococcus marinus (strain MIT 9211)).